The sequence spans 51 residues: Ovomucoid (51 aa).

Positions 3-51 (IDCSGYPKPACTLEFFPLCGSDNQTYSNKCAFCNAAVEKNVTLNHIGEC) constitute a Kazal-like domain. 3 cysteine pairs are disulfide-bonded: Cys5–Cys35, Cys13–Cys32, and Cys21–Cys51. Residue Asn42 is glycosylated (N-linked (GlcNAc...) asparagine).

Its subcellular location is the secreted. This chain is Ovomucoid, found in Eudromia elegans (Elegant crested-tinamou).